The following is an 855-amino-acid chain: tRNA(Met) cytidine acetyltransferase TmcA (855 aa).

Residues glutamine 260, 286-295 (GRGKSALLGI), and arginine 438 each bind ATP. The N-acetyltransferase domain occupies 480-663 (PDLRYWFEDP…GEYSVAVIRP (184 aa)). Acetyl-CoA contacts are provided by residues 590–592 (IAT), 597–603 (MRHGLGS), glutamate 630, and arginine 637.

This sequence belongs to the RNA cytidine acetyltransferase family. TmcA subfamily.

The protein resides in the cytoplasm. It catalyses the reaction cytidine(34) in elongator tRNA(Met) + acetyl-CoA + ATP + H2O = N(4)-acetylcytidine(34) in elongator tRNA(Met) + ADP + phosphate + CoA + H(+). Catalyzes the formation of N(4)-acetylcytidine (ac(4)C) at the wobble position of tRNA(Met), by using acetyl-CoA as an acetyl donor and ATP (or GTP). This chain is tRNA(Met) cytidine acetyltransferase TmcA, found in Methanopyrus kandleri (strain AV19 / DSM 6324 / JCM 9639 / NBRC 100938).